A 231-amino-acid polypeptide reads, in one-letter code: NADH-ubiquinone oxidoreductase chain 4 (231 aa).

A run of 7 helical transmembrane segments spans residues 1–21 (PIAG…YGII), 34–54 (VFLP…LTCL), 61–80 (SLIA…AIII), 84–106 (WGLS…LFCL), 128–148 (ILPM…ATPP), 156–176 (LLII…LGLS), and 211–231 (LLMI…ELVI).

It belongs to the complex I subunit 4 family.

It localises to the mitochondrion membrane. The catalysed reaction is a ubiquinone + NADH + 5 H(+)(in) = a ubiquinol + NAD(+) + 4 H(+)(out). Its function is as follows. Core subunit of the mitochondrial membrane respiratory chain NADH dehydrogenase (Complex I) that is believed to belong to the minimal assembly required for catalysis. Complex I functions in the transfer of electrons from NADH to the respiratory chain. The immediate electron acceptor for the enzyme is believed to be ubiquinone. The sequence is that of NADH-ubiquinone oxidoreductase chain 4 (MT-ND4) from Tropidolaemus wagleri (Wagler's pit viper).